The primary structure comprises 512 residues: ATP synthase subunit alpha (512 aa).

169–176 (GDRQTGKT) lines the ATP pocket.

Belongs to the ATPase alpha/beta chains family. As to quaternary structure, F-type ATPases have 2 components, CF(1) - the catalytic core - and CF(0) - the membrane proton channel. CF(1) has five subunits: alpha(3), beta(3), gamma(1), delta(1), epsilon(1). CF(0) has three main subunits: a(1), b(2) and c(9-12). The alpha and beta chains form an alternating ring which encloses part of the gamma chain. CF(1) is attached to CF(0) by a central stalk formed by the gamma and epsilon chains, while a peripheral stalk is formed by the delta and b chains.

The protein localises to the cell inner membrane. The enzyme catalyses ATP + H2O + 4 H(+)(in) = ADP + phosphate + 5 H(+)(out). Its function is as follows. Produces ATP from ADP in the presence of a proton gradient across the membrane. The alpha chain is a regulatory subunit. The protein is ATP synthase subunit alpha of Azoarcus sp. (strain BH72).